The primary structure comprises 342 residues: N-alpha-acetyl-L-2,4-diaminobutyric acid deacetylase (342 aa).

Positions 103–124 (TAGRRTSPMDGGNLNRSFPGDP) are disordered.

Belongs to the DoeB deacetylase family. The cofactor is Zn(2+).

The protein resides in the cytoplasm. It carries out the reaction (2S)-2-acetamido-4-aminobutanoate + H2O = L-2,4-diaminobutanoate + acetate. In terms of biological role, involved in the degradation of ectoine, which allows H.elongata to utilize ectoine as both a carbon and a nitrogen source for growth. Catalyzes the deacetylation of N-alpha-acetyl-L-2,4-diaminobutyrate (N-alpha-Ac-DABA) to yield L-2,4-diaminobutyrate (DABA). This is N-alpha-acetyl-L-2,4-diaminobutyric acid deacetylase from Halomonas elongata (strain ATCC 33173 / DSM 2581 / NBRC 15536 / NCIMB 2198 / 1H9).